The primary structure comprises 71 residues: DNA-directed RNA polymerase subunit omega (71 aa).

Belongs to the RNA polymerase subunit omega family. As to quaternary structure, the RNAP catalytic core consists of 2 alpha, 1 beta, 1 beta' and 1 omega subunit. When a sigma factor is associated with the core the holoenzyme is formed, which can initiate transcription.

It catalyses the reaction RNA(n) + a ribonucleoside 5'-triphosphate = RNA(n+1) + diphosphate. Its function is as follows. Promotes RNA polymerase assembly. Latches the N- and C-terminal regions of the beta' subunit thereby facilitating its interaction with the beta and alpha subunits. This chain is DNA-directed RNA polymerase subunit omega, found in Aromatoleum aromaticum (strain DSM 19018 / LMG 30748 / EbN1) (Azoarcus sp. (strain EbN1)).